Consider the following 127-residue polypeptide: Aspartate 1-decarboxylase (127 aa).

Ser-25 serves as the catalytic Schiff-base intermediate with substrate; via pyruvic acid. Position 25 is a pyruvic acid (Ser) (Ser-25). Position 57 (Thr-57) interacts with substrate. Tyr-58 (proton donor) is an active-site residue. 73 to 75 (GAA) contributes to the substrate binding site.

Belongs to the PanD family. In terms of assembly, heterooctamer of four alpha and four beta subunits. The cofactor is pyruvate. Is synthesized initially as an inactive proenzyme, which is activated by self-cleavage at a specific serine bond to produce a beta-subunit with a hydroxyl group at its C-terminus and an alpha-subunit with a pyruvoyl group at its N-terminus.

It localises to the cytoplasm. The enzyme catalyses L-aspartate + H(+) = beta-alanine + CO2. The protein operates within cofactor biosynthesis; (R)-pantothenate biosynthesis; beta-alanine from L-aspartate: step 1/1. Catalyzes the pyruvoyl-dependent decarboxylation of aspartate to produce beta-alanine. The chain is Aspartate 1-decarboxylase from Staphylococcus aureus (strain MSSA476).